A 1183-amino-acid chain; its full sequence is Polyphosphatidylinositol phosphatase INP52 (1183 aa).

The segment covering 133–153 (PPSISTHSSRSSLRSSSSRSL) has biased composition (low complexity). The segment at 133-161 (PPSISTHSSRSSLRSSSSRSLNAQEQAPK) is disordered. Serine 152 is modified (phosphoserine). Positions 167-507 (LRKLLSNGSF…GDQISQIYTG (341 aa)) constitute an SAC domain. Serine 522 is modified (phosphoserine). Residues 955 to 968 (SPLLSGPSPQPSVV) are compositionally biased toward low complexity. Residues 955 to 1183 (SPLLSGPSPQ…VHPLKPCDPN (229 aa)) form a disordered region. 2 positions are modified to phosphoserine: serine 1005 and serine 1016. Threonine 1032 is modified (phosphothreonine). 3 stretches are compositionally biased toward polar residues: residues 1046–1057 (KPVSLQKSSSEL), 1082–1100 (STAP…VSTT), and 1130–1145 (KLNT…SPSN). Phosphoserine is present on serine 1095.

It belongs to the synaptojanin family. The protein in the central section; belongs to the inositol 1,4,5-trisphosphate 5-phosphatase family. As to quaternary structure, interacts (via SAC domain) with BSP1; the interaction is direct. Interacts with ABP1.

It is found in the cytoplasm. The protein localises to the cytoskeleton. It localises to the actin patch. It catalyses the reaction a 1,2-diacyl-sn-glycero-3-phospho-(1D-myo-inositol-4,5-bisphosphate) + H2O = a 1,2-diacyl-sn-glycero-3-phospho-(1D-myo-inositol 4-phosphate) + phosphate. Functionally, dephosphorylates a number of phosphatidylinositols (PIs) like phosphatidylinositol 4,5-bisphosphate (PtdIns(4,5)P2), but also phosphatidylinositol 3-phosphate (PtdIns(3)P), phosphatidylinositol 4-phosphate (PtdIns(4)P), and phosphatidylinositol 3,5-bisphosphate (PtdIns(3,5)P2). Controls the cellular levels and subcellular distribution of phosphatidylinositol 3-phosphate and phosphatidylinositol 4,5-bisphosphate. Specifically functions within the early endocytic pathway and actin organization. The sequence is that of Polyphosphatidylinositol phosphatase INP52 from Saccharomyces cerevisiae (strain ATCC 204508 / S288c) (Baker's yeast).